A 319-amino-acid polypeptide reads, in one-letter code: sn-1-specific diacylglycerol lipase ABHD11 (319 aa).

The transit peptide at 1 to 28 (MTLKLAVLRQIFQGSKGWHLWQHWRAFY) directs the protein to the mitochondrion. One can recognise an AB hydrolase-1 domain in the interval 69 to 304 (PPLVLLHGLF…GAGHWVHADK (236 aa)). Residues Ser-143, Glu-239, and His-298 each act as charge relay system in the active site.

This sequence belongs to the AB hydrolase superfamily. In terms of processing, phosphorylated.

Its subcellular location is the mitochondrion. It localises to the mitochondrion matrix. It carries out the reaction 1-octadecanoyl-2-(5Z,8Z,11Z,14Z-eicosatetraenoyl)-sn-glycerol + H2O = 2-(5Z,8Z,11Z,14Z-eicosatetraenoyl)-glycerol + octadecanoate + H(+). The catalysed reaction is a 1,2-diacyl-sn-glycerol + H2O = a 2-acylglycerol + a fatty acid + H(+). It catalyses the reaction a 1,3-diacyl-sn-glycerol + H2O = a 1-acyl-sn-glycerol + a fatty acid + H(+). The enzyme catalyses 1-octadecanoyl-2-(9Z-octadecenoyl)-sn-glycerol + H2O = 2-(9Z-octadecenoyl)-glycerol + octadecanoate + H(+). It carries out the reaction 1-octadecanoyl-2-(4Z,7Z,10Z,13Z,16Z,19Z-docosahexaenoyl)-sn-glycerol + H2O = 2-(4Z,7Z,10Z,13Z,16Z,19Z-docosahexaenoyl)-glycerol + octadecanoate + H(+). The catalysed reaction is 1,2-didecanoylglycerol + H2O = decanoylglycerol + decanoate + H(+). In terms of biological role, catalyzes the hydrolysis of diacylglycerol in vitro and may function as a key regulator in lipid metabolism, namely by regulating the intracellular levels of diacylglycerol. 1,2-diacyl-sn-glycerols are the preferred substrate over 1,3-diacyl-sn-glycerols. The enzyme hydrolyzes stearate in preference to palmitate from the sn-1 position of 1,2-diacyl-sn-glycerols. The polypeptide is sn-1-specific diacylglycerol lipase ABHD11 (Xenopus tropicalis (Western clawed frog)).